Consider the following 584-residue polypeptide: uncharacterized protein (584 aa).

Disordered regions lie at residues Leu123–Pro156, Lys209–Gly264, and Ser355–Thr479. Low complexity-rich tracts occupy residues Ser237–Ser260 and Ser366–Thr376. 2 stretches are compositionally biased toward polar residues: residues Pro377–Thr388 and Asp395–Pro419. The span at Met425–Thr479 shows a compositional bias: low complexity.

This is an uncharacterized protein from Dictyostelium discoideum (Social amoeba).